Consider the following 329-residue polypeptide: DNA-directed RNA polymerase subunit alpha (329 aa).

An alpha N-terminal domain (alpha-NTD) region spans residues Met-1–Arg-235. The interval Phe-249–Glu-329 is alpha C-terminal domain (alpha-CTD).

Belongs to the RNA polymerase alpha chain family. As to quaternary structure, homodimer. The RNAP catalytic core consists of 2 alpha, 1 beta, 1 beta' and 1 omega subunit. When a sigma factor is associated with the core the holoenzyme is formed, which can initiate transcription.

The enzyme catalyses RNA(n) + a ribonucleoside 5'-triphosphate = RNA(n+1) + diphosphate. Functionally, DNA-dependent RNA polymerase catalyzes the transcription of DNA into RNA using the four ribonucleoside triphosphates as substrates. The protein is DNA-directed RNA polymerase subunit alpha of Pectobacterium atrosepticum (strain SCRI 1043 / ATCC BAA-672) (Erwinia carotovora subsp. atroseptica).